We begin with the raw amino-acid sequence, 217 residues long: Small ribosomal subunit protein uS3 (217 aa).

A KH type-2 domain is found at 29 to 97; sequence ADYLHEDLAI…AQLNKLTGKQ (69 aa).

It belongs to the universal ribosomal protein uS3 family. As to quaternary structure, part of the 30S ribosomal subunit. Forms a tight complex with proteins S10 and S14.

Its function is as follows. Binds the lower part of the 30S subunit head. Binds mRNA in the 70S ribosome, positioning it for translation. The sequence is that of Small ribosomal subunit protein uS3 from Streptococcus mutans serotype c (strain ATCC 700610 / UA159).